Reading from the N-terminus, the 518-residue chain is Membrane-bound lytic murein transglycosylase F (518 aa).

An N-terminal signal peptide occupies residues 1–21 (MKKLKINYLFIGILALLLAVA). Residues 22–269 (LWPSIPWFGK…RIEEKYLGHG (248 aa)) are non-LT domain. Residues 270-518 (DDFDYVDTRT…SRKGSEEKQN (249 aa)) are LT domain. Glutamate 314 is a catalytic residue.

In the N-terminal section; belongs to the bacterial solute-binding protein 3 family. This sequence in the C-terminal section; belongs to the transglycosylase Slt family.

It localises to the cell outer membrane. The enzyme catalyses Exolytic cleavage of the (1-&gt;4)-beta-glycosidic linkage between N-acetylmuramic acid (MurNAc) and N-acetylglucosamine (GlcNAc) residues in peptidoglycan, from either the reducing or the non-reducing ends of the peptidoglycan chains, with concomitant formation of a 1,6-anhydrobond in the MurNAc residue.. In terms of biological role, murein-degrading enzyme that degrades murein glycan strands and insoluble, high-molecular weight murein sacculi, with the concomitant formation of a 1,6-anhydromuramoyl product. Lytic transglycosylases (LTs) play an integral role in the metabolism of the peptidoglycan (PG) sacculus. Their lytic action creates space within the PG sacculus to allow for its expansion as well as for the insertion of various structures such as secretion systems and flagella. The polypeptide is Membrane-bound lytic murein transglycosylase F (Escherichia coli O6:K15:H31 (strain 536 / UPEC)).